A 53-amino-acid polypeptide reads, in one-letter code: Conotoxin Ac4.3b (53 aa).

A propeptide spanning residues 1–11 (SDVRNAAVHER) is cleaved from the precursor. Glutamine 12 carries the pyrrolidone carboxylic acid modification. At glutamate 14 the chain carries 4-carboxyglutamate. The O-linked (HexNAc...) serine glycan is linked to serine 18. Proline 28, proline 33, and proline 48 each carry 4-hydroxyproline. Proline 48 carries the post-translational modification Proline amide. Residues 49–53 (GRRND) constitute a propeptide that is removed on maturation.

Belongs to the conotoxin A superfamily. In terms of processing, contains 3 disulfide bonds. As to expression, expressed by the venom duct.

It is found in the secreted. In terms of biological role, probable neurotoxin with ion channel inhibitor activity. This chain is Conotoxin Ac4.3b, found in Conus achatinus (Little frog cone).